A 141-amino-acid chain; its full sequence is uncharacterized protein (141 aa).

3 consecutive transmembrane segments (helical) span residues 32–52 (LIVL…TSII), 69–89 (IIAL…IAGF), and 109–129 (FTGY…PIAY).

The protein localises to the cell membrane. This is an uncharacterized protein from Methanocaldococcus jannaschii (strain ATCC 43067 / DSM 2661 / JAL-1 / JCM 10045 / NBRC 100440) (Methanococcus jannaschii).